A 130-amino-acid polypeptide reads, in one-letter code: Sec-independent protein translocase protein TatB (130 aa).

A helical transmembrane segment spans residues 2-22 (FANIGWGEMLVLVVVGLVVLG). The segment at 108-130 (DAVASAQEAPDEPVRPPFDSDAT) is disordered.

This sequence belongs to the TatB family. In terms of assembly, the Tat system comprises two distinct complexes: a TatABC complex, containing multiple copies of TatA, TatB and TatC subunits, and a separate TatA complex, containing only TatA subunits. Substrates initially bind to the TatABC complex, which probably triggers association of the separate TatA complex to form the active translocon.

It is found in the cell membrane. Part of the twin-arginine translocation (Tat) system that transports large folded proteins containing a characteristic twin-arginine motif in their signal peptide across membranes. Together with TatC, TatB is part of a receptor directly interacting with Tat signal peptides. TatB may form an oligomeric binding site that transiently accommodates folded Tat precursor proteins before their translocation. This chain is Sec-independent protein translocase protein TatB, found in Mycobacterium ulcerans (strain Agy99).